Consider the following 372-residue polypeptide: Peptidyl-prolyl cis-trans isomerase D (372 aa).

The region spanning 14–178 (YFDISIGGKS…KEALIVDCGE (165 aa)) is the PPIase cyclophilin-type domain. TPR repeat units follow at residues 219 to 252 (AKAS…INEE), 271 to 304 (FSLN…GGVK), and 309 to 342 (AKAF…APND).

Belongs to the cyclophilin-type PPIase family. PPIase D subfamily.

The protein resides in the cytoplasm. The enzyme catalyses [protein]-peptidylproline (omega=180) = [protein]-peptidylproline (omega=0). In terms of biological role, PPIases accelerate the folding of proteins. It catalyzes the cis-trans isomerization of proline imidic peptide bonds in oligopeptides. In Gibberella zeae (strain ATCC MYA-4620 / CBS 123657 / FGSC 9075 / NRRL 31084 / PH-1) (Wheat head blight fungus), this protein is Peptidyl-prolyl cis-trans isomerase D (CPR6).